Consider the following 488-residue polypeptide: Glutamyl-tRNA(Gln) amidotransferase subunit A (488 aa).

Active-site charge relay system residues include lysine 77 and serine 152. The active-site Acyl-ester intermediate is serine 176.

It belongs to the amidase family. GatA subfamily. As to quaternary structure, heterotrimer of A, B and C subunits.

It catalyses the reaction L-glutamyl-tRNA(Gln) + L-glutamine + ATP + H2O = L-glutaminyl-tRNA(Gln) + L-glutamate + ADP + phosphate + H(+). Allows the formation of correctly charged Gln-tRNA(Gln) through the transamidation of misacylated Glu-tRNA(Gln) in organisms which lack glutaminyl-tRNA synthetase. The reaction takes place in the presence of glutamine and ATP through an activated gamma-phospho-Glu-tRNA(Gln). This chain is Glutamyl-tRNA(Gln) amidotransferase subunit A, found in Streptococcus pyogenes serotype M18 (strain MGAS8232).